The chain runs to 384 residues: D-galactosamine-6-phosphate deaminase AgaS (384 aa).

2 SIS domains span residues 45–197 and 215–364; these read LEPL…SQTF and SEGV…PDTP.

This sequence belongs to the SIS family. AgaS subfamily.

It carries out the reaction D-galactosamine 6-phosphate + H2O = D-tagatopyranose 1-phosphate + NH4(+). Catalyzes the isomerization-deamination of galactosamine 6-phosphate to form tagatofuranose 6-phosphate and ammonium ion. The polypeptide is D-galactosamine-6-phosphate deaminase AgaS (Escherichia coli O157:H7).